Consider the following 161-residue polypeptide: Nucleotide-binding protein Bd0338 (161 aa).

This sequence belongs to the YajQ family.

Nucleotide-binding protein. In Bdellovibrio bacteriovorus (strain ATCC 15356 / DSM 50701 / NCIMB 9529 / HD100), this protein is Nucleotide-binding protein Bd0338.